Reading from the N-terminus, the 239-residue chain is Apoptosis regulator Bcl-2 (239 aa).

The BH4 motif lies at 10–30 (DNREIVMKYIHYKLSQRGYEW). The tract at residues 39-85 (PPGAAPAPGIFSSQPGHTPHPAASRDPVARTSPLQTPAAPGAAAGPA) is disordered. Thr-69 is modified (phosphothreonine; by MAPK8). Ser-70 is modified (phosphoserine; by MAPK8 and PKC). The segment covering 75–85 (PAAPGAAAGPA) has biased composition (low complexity). The residue at position 87 (Ser-87) is a Phosphoserine; by MAPK8. The tract at residues 92 to 107 (VVHLTLRQAGDDFSRR) is required for interaction with SEPTIN4 isoform ARTS. Required XIAP-mediated ubiquitination and apoptosis. The BH3 motif lies at 93–107 (VHLTLRQAGDDFSRR). The BH1 signature appears at 136-155 (ELFRDGVNWGRIVAFFEFGG). A BH2 motif is present at residues 187–202 (TWIQDNGGWDAFVELY). The helical transmembrane segment at 212-233 (FSWLSLKTLLSLALVGACITLG) threads the bilayer.

It belongs to the Bcl-2 family. Forms homodimers, and heterodimers with BAX, BAD, BAK and Bcl-X(L). Heterodimerization with BAX requires intact BH1 and BH2 motifs, and is necessary for anti-apoptotic activity. Part of a complex composed of SEPTIN4 isoform ARTS, XIAP and BCL2, within the complex interacts (via BH3 domain) with SEPTIN4 isoform ARTS and XIAP, SEPTIN4 isoform ARTS acts as a scaffold protein and stabilizes the complex. Component of the complex, at least composed of LRPPRC, BECN1 and BCL2; the interactions prevent BECN1 from forming an autophagy-inducing complex with PIK3C3. Interacts with EI24. Also interacts with APAF1, BBC3, BCL2L1, BNIPL, MRPL41 and TP53BP2. Binding to FKBP8 seems to target BCL2 to the mitochondria and probably interferes with the binding of BCL2 to its targets. Interacts with BAG1 in an ATP-dependent manner. Interacts with RAF1 (the 'Ser-338' and 'Ser-339' phosphorylated form). Interacts (via the BH4 domain) with EGLN3; the interaction prevents the formation of the BAX-BCL2 complex and inhibits the anti-apoptotic activity of BCL2. Interacts with G0S2; this interaction also prevents the formation of the anti-apoptotic BAX-BCL2 complex. Interacts with RTL10/BOP. Interacts with the SCF(FBXO10) complex. Interacts (via the loop between motifs BH4 and BH3) with NLRP1 (via LRR repeats), but not with NLRP2, NLRP3, NLRP4, PYCARD, nor MEFV. Interacts with GIMAP3/IAN4, GIMAP4/IAN1 and GIMAP5/IAN5. Interacts with BCAP31. Interacts with IRF3; the interaction is inhibited by Sendai virus infection. Interacts with BECN1; thereby inhibiting autophagy in non-starvation conditions. Interacts with AMBRA1; thereby inhibiting autophagy. In terms of assembly, (Microbial infection) Interacts with Toxoplasma gondii ROP17; the interaction probably promotes BCL2 phosphorylation and degradation. Post-translationally, phosphorylation/dephosphorylation on Ser-70 regulates anti-apoptotic activity. Growth factor-stimulated phosphorylation on Ser-70 by PKC is required for the anti-apoptosis activity and occurs during the G2/M phase of the cell cycle. In the absence of growth factors, BCL2 appears to be phosphorylated by other protein kinases such as ERKs and stress-activated kinases. Phosphorylated by MAPK8/JNK1 at Thr-69, Ser-70 and Ser-87, which stimulates starvation-induced autophagy. Dephosphorylated by protein phosphatase 2A (PP2A). In terms of processing, proteolytically cleaved by caspases during apoptosis. The cleaved protein, lacking the BH4 motif, has pro-apoptotic activity, causes the release of cytochrome c into the cytosol promoting further caspase activity. Monoubiquitinated by PRKN, leading to an increase in its stability. Ubiquitinated by SCF(FBXO10), leading to its degradation by the proteasome. Ubiquitinated by XIAP, leading to its degradation by the proteasome. In terms of tissue distribution, expressed in a variety of tissues.

The protein localises to the mitochondrion outer membrane. It is found in the nucleus membrane. The protein resides in the endoplasmic reticulum membrane. It localises to the cytoplasm. Suppresses apoptosis in a variety of cell systems including factor-dependent lymphohematopoietic and neural cells. Regulates cell death by controlling the mitochondrial membrane permeability. Appears to function in a feedback loop system with caspases. Inhibits caspase activity either by preventing the release of cytochrome c from the mitochondria and/or by binding to the apoptosis-activating factor (APAF-1). Also acts as an inhibitor of autophagy: interacts with BECN1 and AMBRA1 during non-starvation conditions and inhibits their autophagy function. May attenuate inflammation by impairing NLRP1-inflammasome activation, hence CASP1 activation and IL1B release. The chain is Apoptosis regulator Bcl-2 (BCL2) from Homo sapiens (Human).